Reading from the N-terminus, the 438-residue chain is Enolase (438 aa).

Residues His159 and Glu168 each coordinate substrate. The active-site Proton donor is the Glu211. Mg(2+)-binding residues include Asp246, Glu297, and Asp322. The substrate site is built by Glu297 and Asp322. The Proton acceptor role is filled by Lys347. Substrate-binding positions include 374–377 and Lys398; that span reads SHRS.

It belongs to the enolase family. As to quaternary structure, homodimer. Mg(2+) serves as cofactor.

It localises to the cytoplasm. The catalysed reaction is (2R)-2-phosphoglycerate = phosphoenolpyruvate + H2O. It participates in carbohydrate degradation; glycolysis; pyruvate from D-glyceraldehyde 3-phosphate: step 4/5. This chain is Enolase (enoA), found in Aspergillus fumigatus (strain ATCC MYA-4609 / CBS 101355 / FGSC A1100 / Af293) (Neosartorya fumigata).